Consider the following 421-residue polypeptide: Hydrolyase poxO (421 aa).

The Nucleophile role is filled by Ser-239.

The protein belongs to the AB hydrolase superfamily. FUS2 hydrolase family. As to quaternary structure, homodimer.

It participates in secondary metabolite biosynthesis. Hydrolyase; part of the gene cluster that mediates the biosynthesis of oxaleimides, cytotoxic compounds containing an unusual disubstituted succinimide moiety. The first step of the pathway is provided by the HR-PKS poxF that serves in a new mode of collaborative biosynthesis with the PKS-NRPS poxE, by providing the olefin containing amino acid substrate via the synthesis of an ACP-bound dec-4-enoate. The cytochrome P450 monooxygenase poxM-catalyzed oxidation at the alpha-position creates the enzyme-bound 2-hydroxydec-4-enoyl-ACP thioester, which may be prone to spontaneous hydrolysis to yield 2-hydroxydec-4-enoic acid due to increased electrophilicity of the carbonyl. 2-hydroxydec-4-enoic acid can then be further oxidized by poxM to yield the alpha-ketoacid 2-oxodec-4-enoicacid, which is reductively aminated by the aminotransferase poxL to yield (S,E)-2-aminodec-4-enoic acid. The Hybrid PKS-NRPS synthetase poxE then performs condensation between the octaketide product of its PKS modules and the amino group of (S,E)-2-aminodec-4-enoic acid which is activated and incorporated by the adenylation domain. The resulting aminoacyl product can be cyclized by the Diels-Alderase PoxQ and reductively released by the reductive (R) domain of poxE to yield an aldehyde intermediate. The released aldehyde is then substrate for a Knoevenagel condensation by the hydrolyase poxO followed by an oxidation at the 5-position of the pyrrolidone ring. The presence of the olefin from the amino acid building block allows for migration of the substituted allyl group to occur. This allylic transposition reaction takes place in a conjugate addition, semipinacol-like fashion to yield a succinimide intermediate. Iterative two-electron oxidations of the C7 methyl of the succinimide intermediate to the carboxylic acid can be catalyzed by one of two remaining cytochrome P450 monooxygenasess poxC or poxD to yield oxaleimide A. Subsequent oxidation yields the maleimide scaffold oxaleimide I. Both oxaleimide A and oxaleimide I can undergo oxidative modifications in the decalin ring to yield the series of products oxaleimides B to H. The polypeptide is Hydrolyase poxO (Penicillium oxalicum).